The following is a 337-amino-acid chain: Protein EXORDIUM-like 3 (337 aa).

The first 25 residues, 1–25, serve as a signal peptide directing secretion; it reads MHSLPVNLVLTVLTVFLTSPAQVIG. Asn-34, Asn-66, and Asn-119 each carry an N-linked (GlcNAc...) asparagine glycan.

This sequence belongs to the EXORDIUM family.

It is found in the secreted. The protein resides in the extracellular space. Its subcellular location is the apoplast. May play a role in a brassinosteroid-dependent regulation of growth and development. This Arabidopsis thaliana (Mouse-ear cress) protein is Protein EXORDIUM-like 3 (EXL3).